The chain runs to 305 residues: Tyrosine recombinase XerC (305 aa).

Residues 4–95 (TSIQALINKW…AVKNFYRFLE (92 aa)) form the Core-binding (CB) domain. Positions 116–298 (LLPKALSEDD…SIKHLEAVYT (183 aa)) constitute a Tyr recombinase domain. Catalysis depends on residues R159, K182, H250, R253, and H276. Y285 acts as the O-(3'-phospho-DNA)-tyrosine intermediate in catalysis.

The protein belongs to the 'phage' integrase family. XerC subfamily. As to quaternary structure, forms a cyclic heterotetrameric complex composed of two molecules of XerC and two molecules of XerD.

It localises to the cytoplasm. Site-specific tyrosine recombinase, which acts by catalyzing the cutting and rejoining of the recombining DNA molecules. The XerC-XerD complex is essential to convert dimers of the bacterial chromosome into monomers to permit their segregation at cell division. It also contributes to the segregational stability of plasmids. The sequence is that of Tyrosine recombinase XerC from Rickettsia peacockii (strain Rustic).